A 259-amino-acid polypeptide reads, in one-letter code: 3-methyl-2-oxobutanoate hydroxymethyltransferase (259 aa).

Mg(2+) contacts are provided by Asp44 and Asp83. 3-methyl-2-oxobutanoate is bound by residues 44–45, Asp83, and Lys113; that span reads DS. Glu115 lines the Mg(2+) pocket. Residue Glu183 is the Proton acceptor of the active site.

The protein belongs to the PanB family. As to quaternary structure, homodecamer; pentamer of dimers. Requires Mg(2+) as cofactor.

Its subcellular location is the cytoplasm. It carries out the reaction 3-methyl-2-oxobutanoate + (6R)-5,10-methylene-5,6,7,8-tetrahydrofolate + H2O = 2-dehydropantoate + (6S)-5,6,7,8-tetrahydrofolate. The protein operates within cofactor biosynthesis; (R)-pantothenate biosynthesis; (R)-pantoate from 3-methyl-2-oxobutanoate: step 1/2. Its function is as follows. Catalyzes the reversible reaction in which hydroxymethyl group from 5,10-methylenetetrahydrofolate is transferred onto alpha-ketoisovalerate to form ketopantoate. The protein is 3-methyl-2-oxobutanoate hydroxymethyltransferase of Acaryochloris marina (strain MBIC 11017).